Reading from the N-terminus, the 897-residue chain is 3'-5' exonuclease DinG (897 aa).

Residues 8–161 (VVDLETTGNQ…DEDAATTAKL (154 aa)) enclose the Exonuclease domain. The Helicase ATP-binding domain occupies 241-496 (SKAVDQLGLT…KAIDQLEKQR (256 aa)). 276-283 (ASLGSGKS) serves as a coordination point for ATP. Residues 448–451 (DEAH) carry the DEAH box motif. In terms of domain architecture, Helicase C-terminal spans 703–893 (NIDEYVASIV…QFGKLLRQIQ (191 aa)).

It belongs to the helicase family. DinG subfamily. Type 2 sub-subfamily.

Functionally, 3'-5' exonuclease. The chain is 3'-5' exonuclease DinG from Staphylococcus aureus (strain USA300).